A 404-amino-acid polypeptide reads, in one-letter code: MEDITQLLSDVLEDLVESELKQFTRQLWIGVKPGVEPIPRGKLENKDRQDVVDSMVQQYSEDAGTITVQTLRKIKQNERAKRLESNLLKVQSQGQENKQNSEEPQPIPQIISQPIQQIISQPINNAGSEDLQPIQADWQRPRQIIPCSQETKNTLLKAHGDDIYTPRSGTQRKGLALLITNIQFANTQHNRNGADRDEENAEWLLRSLGFAVIKYRNLSGKDIRRAVENFSKRREHEDADSTFIVIMSHGTRIDNKDAIVGVSDDVYFIEETFSHLNSVNCPALIDKPKVILIQACRGGQSSGVLAQDSVFASDSWVHMEKDFVCFMSTMPNTFAYRNPIEGSFFISYIVDVFCSSAHRDDIMELFRKVTLRMEKDQRFQGQAKLLPCIERTSISKRFYLFPGL.

The propeptide occupies 1–171 (MEDITQLLSD…DIYTPRSGTQ (171 aa)). Positions 8–80 (LSDVLEDLVE…LRKIKQNERA (73 aa)) constitute a Pyrin domain. Active-site residues include histidine 249 and cysteine 296. The propeptide occupies 301-316 (SSGVLAQDSVFASDSW).

Belongs to the peptidase C14A family. As to quaternary structure, upon direct LPS-binding, forms large homooligomers, resulting in its activation. These oligomers are often referred to as 'non-canonical inflammasomes'. Heterotetramer that consists of two anti-parallel arranged heterodimers, each one formed by a 20 kDa (p20) and a 10 kDa (p10) subunit. Interacts with caspa. Interacts with pycard; the interaction only occurs in the presence of nlrp1. Component of NLRP1 inflammasomes. Inflammasomes are supramolecular complexes that assemble in the cytosol in response to pathogens and other damage-associated signals and play critical roles in innate immunity and inflammation. The NLRP1 inflammasome is composed of the signal sensor nlrp1, and the adapter pycard (asc), which recruit effector pro-inflammatory caspases caspa and/or caspb. The interaction between nlrp1 and pycard is required for the sequential recruitment of caspa and then caspb. Caspa is preferentially recruited first and this causes the cleavage of pro-il1b into the midformed il1b. This is followed by the recruitment of caspb, which is activated and cleaves the midformed il1b resulting in il1b maturation. The two subunits are derived from the precursor sequence by an autocatalytic mechanism. Expressed in the spleen, kidney and liver, and highly expressed in the gills and gut.

It is found in the inflammasome. The protein resides in the cytoplasm. It carries out the reaction Strict requirement for Asp at the P1 position. It has a preferred cleavage sequence of Tyr-Val-Ala-Asp-|- but also cleaves at Asp-Glu-Val-Asp-|-.. Activated by homooligomerization induced by direct binding to cytosolic LPS. In terms of biological role, thiol protease which cleaves IL-1 beta (il1b), releasing the mature cytokine which is involved in a variety of inflammatory processes, and mediates apoptosis. Component of the NLRP1 inflammasome, which plays a crucial role in innate immunity and inflammation. In response to pathogens and other damage-associated signals, recruited to the NLRP1 inflammasome in its precursor form following the recruitment of caspase caspa. Its subsequent activation causes the cleavage of the midformed pro-il1b and results in il1b maturation and secretion in the extracellular milieu. Activated by direct binding to bacterial lipopolysaccharides (LPS), which causes non-canonical inflammasome activation and results in the pyroptosis of infected cells and their extrusion into the gut lumen, as well as in cytokine secretion. Plays a crucial role in the restriction of bacterial infection to intestinal sites. Pyroptosis limits bacterial replication, while cytokine secretion promotes the recruitment and activation of immune cells and triggers mucosal inflammation. Promotes pyroptosis by bacterial infection by E.piscicida. The polypeptide is Caspase b (Danio rerio (Zebrafish)).